Here is a 155-residue protein sequence, read N- to C-terminus: Small ribosomal subunit protein uS7cz/uS7cy (155 aa).

It belongs to the universal ribosomal protein uS7 family. In terms of assembly, part of the 30S ribosomal subunit.

The protein localises to the plastid. It localises to the chloroplast. One of the primary rRNA binding proteins, it binds directly to 16S rRNA where it nucleates assembly of the head domain of the 30S subunit. The sequence is that of Small ribosomal subunit protein uS7cz/uS7cy (rps7-A) from Psilotum nudum (Whisk fern).